A 51-amino-acid polypeptide reads, in one-letter code: Insulin (51 aa).

3 cysteine pairs are disulfide-bonded: Cys-7/Cys-37, Cys-19/Cys-50, and Cys-36/Cys-41.

This sequence belongs to the insulin family. Heterodimer of a B chain and an A chain linked by two disulfide bonds.

The protein resides in the secreted. In terms of biological role, insulin decreases blood glucose concentration. It increases cell permeability to monosaccharides, amino acids and fatty acids. It accelerates glycolysis, the pentose phosphate cycle, and glycogen synthesis in liver. This chain is Insulin (INS), found in Didelphis virginiana (North American opossum).